Reading from the N-terminus, the 332-residue chain is Ketol-acid reductoisomerase (NADP(+)) (332 aa).

Residues 1–182 enclose the KARI N-terminal Rossmann domain; the sequence is MAVIYYDKDC…GSNRAGILET (182 aa). Residues 25–28 and 83–86 each bind NADP(+); these read YGAQ and DTSQ. His-108 is an active-site residue. NADP(+) is bound at residue Gly-134. A KARI C-terminal knotted domain is found at 183 to 328; the sequence is TFAEETETDL…AELRSMMSWL (146 aa). Residues Asp-191, Glu-195, Glu-227, and Glu-231 each contribute to the Mg(2+) site. Ser-252 is a substrate binding site.

The protein belongs to the ketol-acid reductoisomerase family. Mg(2+) is required as a cofactor.

The catalysed reaction is (2R)-2,3-dihydroxy-3-methylbutanoate + NADP(+) = (2S)-2-acetolactate + NADPH + H(+). The enzyme catalyses (2R,3R)-2,3-dihydroxy-3-methylpentanoate + NADP(+) = (S)-2-ethyl-2-hydroxy-3-oxobutanoate + NADPH + H(+). Its pathway is amino-acid biosynthesis; L-isoleucine biosynthesis; L-isoleucine from 2-oxobutanoate: step 2/4. The protein operates within amino-acid biosynthesis; L-valine biosynthesis; L-valine from pyruvate: step 2/4. Involved in the biosynthesis of branched-chain amino acids (BCAA). Catalyzes an alkyl-migration followed by a ketol-acid reduction of (S)-2-acetolactate (S2AL) to yield (R)-2,3-dihydroxy-isovalerate. In the isomerase reaction, S2AL is rearranged via a Mg-dependent methyl migration to produce 3-hydroxy-3-methyl-2-ketobutyrate (HMKB). In the reductase reaction, this 2-ketoacid undergoes a metal-dependent reduction by NADPH to yield (R)-2,3-dihydroxy-isovalerate. The chain is Ketol-acid reductoisomerase (NADP(+)) from Dehalococcoides mccartyi (strain CBDB1).